The sequence spans 179 residues: Large ribosomal subunit protein uL5 (179 aa).

Belongs to the universal ribosomal protein uL5 family. In terms of assembly, part of the 50S ribosomal subunit; part of the 5S rRNA/L5/L18/L25 subcomplex. Contacts the 5S rRNA and the P site tRNA. Forms a bridge to the 30S subunit in the 70S ribosome.

Functionally, this is one of the proteins that bind and probably mediate the attachment of the 5S RNA into the large ribosomal subunit, where it forms part of the central protuberance. In the 70S ribosome it contacts protein S13 of the 30S subunit (bridge B1b), connecting the 2 subunits; this bridge is implicated in subunit movement. Contacts the P site tRNA; the 5S rRNA and some of its associated proteins might help stabilize positioning of ribosome-bound tRNAs. This is Large ribosomal subunit protein uL5 from Geobacter sulfurreducens (strain ATCC 51573 / DSM 12127 / PCA).